Here is a 158-residue protein sequence, read N- to C-terminus: MKENVLDVLMYLFENYIDEDTEIEPDRIQLQDKLLEAGFPGAEIDRAFDWLENLANQEDQPLGQARHDSALRVYTDREVERLDARARGFLLFLEQNGVLDAGTRELVIDRIMDLDAEDISLDQLKWVTLMVLFNRPDQEAAYTWLESMMFDSPPEFLH.

Belongs to the Smg family.

The protein is Protein Smg homolog of Thioalkalivibrio sulfidiphilus (strain HL-EbGR7).